The following is a 91-amino-acid chain: Large ribosomal subunit protein bL27 (91 aa).

Positions Met1–Thr10 are enriched in gly residues. Residues Met1–Met20 are disordered.

Belongs to the bacterial ribosomal protein bL27 family.

The protein is Large ribosomal subunit protein bL27 of Verminephrobacter eiseniae (strain EF01-2).